A 1072-amino-acid chain; its full sequence is DNA-directed RNA polymerase subunit beta (1072 aa).

Belongs to the RNA polymerase beta chain family. In terms of assembly, in plastids the minimal PEP RNA polymerase catalytic core is composed of four subunits: alpha, beta, beta', and beta''. When a (nuclear-encoded) sigma factor is associated with the core the holoenzyme is formed, which can initiate transcription.

It is found in the plastid. The protein resides in the chloroplast. The enzyme catalyses RNA(n) + a ribonucleoside 5'-triphosphate = RNA(n+1) + diphosphate. DNA-dependent RNA polymerase catalyzes the transcription of DNA into RNA using the four ribonucleoside triphosphates as substrates. The protein is DNA-directed RNA polymerase subunit beta of Arabis hirsuta (Hairy rock-cress).